Here is a 62-residue protein sequence, read N- to C-terminus: Cytotoxin 7 (62 aa).

The signal sequence occupies residues 1 to 2; it reads YT. 4 disulfide bridges follow: Cys5–Cys23, Cys16–Cys40, Cys44–Cys55, and Cys56–Cys61.

It belongs to the three-finger toxin family. Short-chain subfamily. Type IA cytotoxin sub-subfamily. Monomer in solution; Homodimer and oligomer in the presence of negatively charged lipids forming a pore with a size ranging between 20 and 30 Angstroms. As to expression, expressed by the venom gland.

It localises to the secreted. The protein resides in the target cell membrane. Shows cytolytic activity on many different cells by forming pore in lipid membranes. In vivo, increases heart rate or kills the animal by cardiac arrest. In addition, it binds to heparin with high affinity, interacts with Kv channel-interacting protein 1 (KCNIP1) in a calcium-independent manner, and binds to integrin alpha-V/beta-3 (ITGAV/ITGB3) with moderate affinity. This is Cytotoxin 7 from Naja sputatrix (Malayan spitting cobra).